We begin with the raw amino-acid sequence, 173 residues long: Thiol-disulfide oxidoreductase ResA (173 aa).

Residues 10–29 traverse the membrane as a helical; Signal-anchor for type II membrane protein segment; that stretch reads VIILLILSGAVGFTLYQGYF. The Thioredoxin domain occupies 35–173; the sequence is MEIGKEAPNF…LEEYLKKITP (139 aa). An intrachain disulfide couples C73 to C76.

This sequence belongs to the thioredoxin family. ResA subfamily.

The protein localises to the cell membrane. It functions in the pathway protein modification; cytochrome c assembly. Its function is as follows. Thiol-disulfide oxidoreductase which is required in disulfide reduction during c-type cytochrome synthesis. May accept reducing equivalents from CcdA, leading to breakage of disulfide bonds in apocytochrome c; following this reduction heme can be covalently attached. The chain is Thiol-disulfide oxidoreductase ResA from Bacillus cereus (strain ATCC 10987 / NRS 248).